Here is a 629-residue protein sequence, read N- to C-terminus: tRNA uridine 5-carboxymethylaminomethyl modification enzyme MnmG (629 aa).

FAD-binding positions include G13–G18, V125, and S180. G273–F287 is a binding site for NAD(+). Q370 is an FAD binding site.

It belongs to the MnmG family. As to quaternary structure, homodimer. Heterotetramer of two MnmE and two MnmG subunits. The cofactor is FAD.

It localises to the cytoplasm. NAD-binding protein involved in the addition of a carboxymethylaminomethyl (cmnm) group at the wobble position (U34) of certain tRNAs, forming tRNA-cmnm(5)s(2)U34. The sequence is that of tRNA uridine 5-carboxymethylaminomethyl modification enzyme MnmG from Shewanella sp. (strain MR-7).